Here is a 328-residue protein sequence, read N- to C-terminus: Beta-ketoacyl-[acyl-carrier-protein] synthase III (328 aa).

Active-site residues include Cys113 and His253. The ACP-binding stretch occupies residues 254–258; that stretch reads QANLR. Asn283 is a catalytic residue.

The protein belongs to the thiolase-like superfamily. FabH family. As to quaternary structure, homodimer.

It localises to the cytoplasm. The catalysed reaction is malonyl-[ACP] + acetyl-CoA + H(+) = 3-oxobutanoyl-[ACP] + CO2 + CoA. Its pathway is lipid metabolism; fatty acid biosynthesis. Catalyzes the condensation reaction of fatty acid synthesis by the addition to an acyl acceptor of two carbons from malonyl-ACP. Catalyzes the first condensation reaction which initiates fatty acid synthesis and may therefore play a role in governing the total rate of fatty acid production. Possesses both acetoacetyl-ACP synthase and acetyl transacylase activities. Its substrate specificity determines the biosynthesis of branched-chain and/or straight-chain of fatty acids. The sequence is that of Beta-ketoacyl-[acyl-carrier-protein] synthase III from Fusobacterium nucleatum subsp. nucleatum (strain ATCC 25586 / DSM 15643 / BCRC 10681 / CIP 101130 / JCM 8532 / KCTC 2640 / LMG 13131 / VPI 4355).